The following is a 200-amino-acid chain: Serine/threonine-protein kinase mos (200 aa).

Residues Leu2–Ala200 enclose the Protein kinase domain. ATP contacts are provided by residues Leu8–Val16 and Lys29. Asp143 functions as the Proton acceptor in the catalytic mechanism.

Belongs to the protein kinase superfamily. Ser/Thr protein kinase family.

The catalysed reaction is L-seryl-[protein] + ATP = O-phospho-L-seryl-[protein] + ADP + H(+). The enzyme catalyses L-threonyl-[protein] + ATP = O-phospho-L-threonyl-[protein] + ADP + H(+). This Apteryx australis (Southern brown kiwi) protein is Serine/threonine-protein kinase mos (MOS).